The chain runs to 154 residues: 6,7-dimethyl-8-ribityllumazine synthase (154 aa).

Residues Phe22, Ala56–Glu58, and Val81–Ile83 each bind 5-amino-6-(D-ribitylamino)uracil. Position 86-87 (Glu86–Thr87) interacts with (2S)-2-hydroxy-3-oxobutyl phosphate. The Proton donor role is filled by His89. Residue Phe114 participates in 5-amino-6-(D-ribitylamino)uracil binding. (2S)-2-hydroxy-3-oxobutyl phosphate is bound at residue Arg128.

This sequence belongs to the DMRL synthase family.

The enzyme catalyses (2S)-2-hydroxy-3-oxobutyl phosphate + 5-amino-6-(D-ribitylamino)uracil = 6,7-dimethyl-8-(1-D-ribityl)lumazine + phosphate + 2 H2O + H(+). It functions in the pathway cofactor biosynthesis; riboflavin biosynthesis; riboflavin from 2-hydroxy-3-oxobutyl phosphate and 5-amino-6-(D-ribitylamino)uracil: step 1/2. In terms of biological role, catalyzes the formation of 6,7-dimethyl-8-ribityllumazine by condensation of 5-amino-6-(D-ribitylamino)uracil with 3,4-dihydroxy-2-butanone 4-phosphate. This is the penultimate step in the biosynthesis of riboflavin. The chain is 6,7-dimethyl-8-ribityllumazine synthase from Chlamydia abortus (strain DSM 27085 / S26/3) (Chlamydophila abortus).